A 362-amino-acid chain; its full sequence is Severin (362 aa).

A Gelsolin-like 1 repeat occupies 53 to 102; that stretch reads FKVVPVPESSYGKFYDGDSYIILHTFKEGNSLKHDIHFFLGTFTTQDEAG. An a 1,2-diacyl-sn-glycero-3-phospho-(1D-myo-inositol-4,5-bisphosphate)-binding site is contributed by 162–170; the sequence is RLLHISGDK. Gelsolin-like repeat units lie at residues 172-212 and 280-323; these read AKVA…QEKN and LKFS…NEKK.

This sequence belongs to the villin/gelsolin family.

Functionally, severin blocks the ends of F-actin and causes the fragmentation and depolymerization of actin filaments in a Ca(2+) dependent manner. This chain is Severin (sevA), found in Dictyostelium discoideum (Social amoeba).